Reading from the N-terminus, the 546-residue chain is CTP synthase (546 aa).

Positions methionine 1 to leucine 265 are amidoligase domain. Serine 13 provides a ligand contact to CTP. Serine 13 lines the UTP pocket. ATP-binding positions include serine 14–isoleucine 19 and aspartate 71. Aspartate 71 and glutamate 139 together coordinate Mg(2+). Residues aspartate 146–glutamate 148, lysine 186–glutamine 191, and lysine 222 contribute to the CTP site. UTP is bound by residues lysine 186–glutamine 191 and lysine 222. A Glutamine amidotransferase type-1 domain is found at lysine 290–aspartate 542. Position 351 (glycine 351) interacts with L-glutamine. Cysteine 378 (nucleophile; for glutamine hydrolysis) is an active-site residue. Residues leucine 379 to glutamine 382, glutamate 402, and arginine 469 contribute to the L-glutamine site. Active-site residues include histidine 515 and glutamate 517.

It belongs to the CTP synthase family. Homotetramer.

The catalysed reaction is UTP + L-glutamine + ATP + H2O = CTP + L-glutamate + ADP + phosphate + 2 H(+). It catalyses the reaction L-glutamine + H2O = L-glutamate + NH4(+). The enzyme catalyses UTP + NH4(+) + ATP = CTP + ADP + phosphate + 2 H(+). The protein operates within pyrimidine metabolism; CTP biosynthesis via de novo pathway; CTP from UDP: step 2/2. Allosterically activated by GTP, when glutamine is the substrate; GTP has no effect on the reaction when ammonia is the substrate. The allosteric effector GTP functions by stabilizing the protein conformation that binds the tetrahedral intermediate(s) formed during glutamine hydrolysis. Inhibited by the product CTP, via allosteric rather than competitive inhibition. In terms of biological role, catalyzes the ATP-dependent amination of UTP to CTP with either L-glutamine or ammonia as the source of nitrogen. Regulates intracellular CTP levels through interactions with the four ribonucleotide triphosphates. This chain is CTP synthase, found in Chromobacterium violaceum (strain ATCC 12472 / DSM 30191 / JCM 1249 / CCUG 213 / NBRC 12614 / NCIMB 9131 / NCTC 9757 / MK).